We begin with the raw amino-acid sequence, 226 residues long: Eukaryotic translation initiation factor 3 subunit K (226 aa).

Residues Y44–H202 enclose the PCI domain.

This sequence belongs to the eIF-3 subunit K family. As to quaternary structure, component of the eukaryotic translation initiation factor 3 (eIF-3) complex.

The protein localises to the cytoplasm. Its function is as follows. Component of the eukaryotic translation initiation factor 3 (eIF-3) complex, which is involved in protein synthesis of a specialized repertoire of mRNAs and, together with other initiation factors, stimulates binding of mRNA and methionyl-tRNAi to the 40S ribosome. The eIF-3 complex specifically targets and initiates translation of a subset of mRNAs involved in cell proliferation. This chain is Eukaryotic translation initiation factor 3 subunit K (TIF3K1), found in Arabidopsis thaliana (Mouse-ear cress).